Reading from the N-terminus, the 508-residue chain is Pentatricopeptide repeat-containing protein At5g48730, chloroplastic (508 aa).

A compositionally biased stretch (polar residues) spans 1–10 (MVSLSTSTSH). The disordered stretch occupies residues 1-22 (MVSLSTSTSHAPPLPTNRRTAE). Residues 1–28 (MVSLSTSTSHAPPLPTNRRTAERTFTVR) constitute a chloroplast transit peptide. PPR repeat units lie at residues 149–183 (NVGI…GCVV), 184–214 (NHEV…MKSS), 220–254 (DVHT…GIRP), 255–290 (NTIT…DCKP), 291–325 (DSWT…GIEP), 326–360 (NIRT…HYSW), 361–395 (TIVT…RIFP), 396–430 (SCVT…DIRL), 431–465 (DLVF…GFKP), and 466–500 (DKIT…GEAQ).

Belongs to the PPR family. P subfamily.

It localises to the plastid. The protein localises to the chloroplast. This chain is Pentatricopeptide repeat-containing protein At5g48730, chloroplastic, found in Arabidopsis thaliana (Mouse-ear cress).